The following is a 725-amino-acid chain: 1,4-alpha-glucan branching enzyme GlgB (725 aa).

The active-site Nucleophile is the Asp403. Glu456 functions as the Proton donor in the catalytic mechanism.

This sequence belongs to the glycosyl hydrolase 13 family. GlgB subfamily. In terms of assembly, monomer.

The enzyme catalyses Transfers a segment of a (1-&gt;4)-alpha-D-glucan chain to a primary hydroxy group in a similar glucan chain.. Its pathway is glycan biosynthesis; glycogen biosynthesis. Functionally, catalyzes the formation of the alpha-1,6-glucosidic linkages in glycogen by scission of a 1,4-alpha-linked oligosaccharide from growing alpha-1,4-glucan chains and the subsequent attachment of the oligosaccharide to the alpha-1,6 position. This Pectobacterium atrosepticum (strain SCRI 1043 / ATCC BAA-672) (Erwinia carotovora subsp. atroseptica) protein is 1,4-alpha-glucan branching enzyme GlgB.